The sequence spans 275 residues: Phosphonoacetaldehyde hydrolase (275 aa).

D15 (nucleophile) is an active-site residue. Residues D15 and A17 each contribute to the Mg(2+) site. The active-site Schiff-base intermediate with substrate is K56. D189 is a Mg(2+) binding site.

The protein belongs to the HAD-like hydrolase superfamily. PhnX family. Homodimer. Mg(2+) serves as cofactor.

It catalyses the reaction phosphonoacetaldehyde + H2O = acetaldehyde + phosphate + H(+). Its function is as follows. Involved in phosphonate degradation. The chain is Phosphonoacetaldehyde hydrolase from Pseudomonas putida (strain W619).